The following is a 127-amino-acid chain: Small ribosomal subunit protein uS11 (127 aa).

This sequence belongs to the universal ribosomal protein uS11 family. Part of the 30S ribosomal subunit. Interacts with proteins S7 and S18. Binds to IF-3.

Its function is as follows. Located on the platform of the 30S subunit, it bridges several disparate RNA helices of the 16S rRNA. Forms part of the Shine-Dalgarno cleft in the 70S ribosome. The sequence is that of Small ribosomal subunit protein uS11 from Chlorobaculum parvum (strain DSM 263 / NCIMB 8327) (Chlorobium vibrioforme subsp. thiosulfatophilum).